A 449-amino-acid polypeptide reads, in one-letter code: Hyaluronidase-1 (449 aa).

A signal peptide spans 1-23; the sequence is MYHLWIKCLAAWIFLKRCNGVHA. 2 disulfide bridges follow: C47-C340 and C211-C227. N-linked (GlcNAc...) asparagine glycosylation is found at N67, N103, and N111. E135 acts as the Proton donor in catalysis. N-linked (GlcNAc...) asparagine glycosylation is present at N153. N-linked (GlcNAc...) asparagine glycosylation is present at N357. Cystine bridges form between C365–C376, C370–C427, and C429–C438. N-linked (GlcNAc...) asparagine glycosylation occurs at N401. The EGF-like domain maps to 427-438; the sequence is CQCYQGWKGLYC.

Belongs to the glycosyl hydrolase 56 family. In terms of assembly, monomer. In terms of tissue distribution, expressed by the venom gland.

The protein localises to the secreted. It carries out the reaction Random hydrolysis of (1-&gt;4)-linkages between N-acetyl-beta-D-glucosamine and D-glucuronate residues in hyaluronate.. Its function is as follows. Snake venom endo-hyaluronidase that degrades hyaluronan to smaller oligosaccharide fragments. In venom, it is not toxic by itself, but increases the diffusion of other venom proteins by degrading the extracellular matrix. In addition, it displays antiedematogenic activity. This chain is Hyaluronidase-1, found in Bitis arietans (African puff adder).